The primary structure comprises 62 residues: Large ribosomal subunit protein eL24 (62 aa).

Zn(2+) contacts are provided by C6, C9, C32, and C36. The segment at 6-36 (CYFCGQMLEPGTGKLYIKKDGSTYFMCSSKC) adopts a C4-type zinc-finger fold.

Belongs to the eukaryotic ribosomal protein eL24 family. Part of the 50S ribosomal subunit. Forms a cluster with proteins L3 and L14. The cofactor is Zn(2+).

Functionally, binds to the 23S rRNA. This Methanosarcina mazei (strain ATCC BAA-159 / DSM 3647 / Goe1 / Go1 / JCM 11833 / OCM 88) (Methanosarcina frisia) protein is Large ribosomal subunit protein eL24.